A 1593-amino-acid polypeptide reads, in one-letter code: THO complex subunit 2 (1593 aa).

Residues 1-163 form an anchor domain; interaction with THOC5 and THOC7 region; it reads MAAAAVVVPA…KLFYKQQKFN (163 aa). Residues 164–534 form a bow domain; interaction with THOC1 dock domain and THOC3 region; that stretch reads LLREENEGYA…GQWKNETYNS (371 aa). Residues 322 to 341 are disordered; the sequence is KMDEREKEKEKEEEKVEKPP. The interval 535–686 is MIF4G domain; interaction with THOC3 and DDX39B; it reads HPLLVKVKAQ…LILKEVVQKM (152 aa). Residues 687 to 1174 form a stern domain region; the sequence is AGIEITEEMT…LAMGYSGQLK (488 aa). Residues 896–965 are a coiled coil; sequence HTSYEREVNK…LKLEKDNWLL (70 aa). Residues 923 to 928 carry the Nuclear localization signal motif; the sequence is KKKKEK. Residues 1175 to 1593 are charged domain; the sequence is SRKSYMIPEN…KHHKSSDKHR (419 aa). The disordered stretch occupies residues 1184-1593; sequence NEFHHKDPPP…KHHKSSDKHR (410 aa). Residues 1218-1234 show a composition bias toward basic and acidic residues; it reads KSDESSTEETDKSRERS. The residue at position 1222 (S1222) is a Phosphoserine. Positions 1251-1263 are enriched in low complexity; it reads GNSSNGNSGSNSN. Basic and acidic residues-rich tracts occupy residues 1265 to 1285, 1294 to 1343, and 1353 to 1383; these read AVKENDKEKGKEKEKEKKEKT, VLGK…EKFK, and STQEREREKEPSRERDIAKEMKSKENVKGGE. T1385 carries the phosphothreonine modification. Phosphoserine is present on residues S1390, S1393, and S1417. Polar residues predominate over residues 1416–1425; it reads PSPSHSSTVK. Residue T1443 is modified to Phosphothreonine. Positions 1449–1504 are enriched in basic and acidic residues; that stretch reads KSKEREMDKKDLDKSRERSREREKKDEKDRKERKRDHSNNDREVPPDLTKRRKEEN. 3 positions are modified to phosphoserine: S1450, S1486, and S1516. The segment covering 1524 to 1582 has biased composition (basic and acidic residues); it reads NEKDKEKNKSKSSGKEKGSDSFKSEKMDKISSGGKKESRHDKEKIEKKEKRDSSGGKEE. Residues 1583-1593 are compositionally biased toward basic residues; the sequence is KKHHKSSDKHR.

The protein belongs to the THOC2 family. Component of the THO subcomplex, which is composed of THOC1, THOC2, THOC3, THOC5, THOC6 and THOC7. The THO subcomplex interacts with DDX39B to form the THO-DDX39B complex which multimerizes into a 28-subunit tetrameric assembly. Component of the transcription/export (TREX) complex at least composed of ALYREF/THOC4, DDX39B, SARNP/CIP29, CHTOP and the THO subcomplex; in the complex interacts with THOC1, THOC3, THOC5, THOC7 and DDX39B. TREX seems to have a dynamic structure involving ATP-dependent remodeling. Interacts with POLDIP3 and ZC3H11A. Expressed in the hippocampus and the cerebral cortex.

It localises to the nucleus. The protein localises to the nucleus speckle. The protein resides in the cytoplasm. Component of the THO subcomplex of the TREX complex which is thought to couple mRNA transcription, processing and nuclear export, and which specifically associates with spliced mRNA and not with unspliced pre-mRNA. Required for efficient export of polyadenylated RNA and spliced mRNA. The THOC1-THOC2-THOC3 core complex alone is sufficient to bind export factor NXF1-NXT1 and promote ATPase activity of DDX39B; in the complex THOC2 is the only component that directly interacts with DDX39B. TREX is recruited to spliced mRNAs by a transcription-independent mechanism, binds to mRNA upstream of the exon-junction complex (EJC) and is recruited in a splicing- and cap-dependent manner to a region near the 5' end of the mRNA where it functions in mRNA export to the cytoplasm via the TAP/NXF1 pathway. Required for NXF1 localization to the nuclear rim. THOC2 (and probably the THO complex) is involved in releasing mRNA from nuclear speckle domains. Its function is as follows. (Microbial infection) The TREX complex is essential for the export of Kaposi's sarcoma-associated herpesvirus (KSHV) intronless mRNAs and infectious virus production. This Homo sapiens (Human) protein is THO complex subunit 2 (THOC2).